A 414-amino-acid polypeptide reads, in one-letter code: Transforming growth factor beta-2 proprotein (414 aa).

An N-terminal signal peptide occupies residues 1–20; the sequence is MHYCVLSAFLLLHLVTAALS. N-linked (GlcNAc...) asparagine glycans are attached at residues Asn-72, Asn-140, and Asn-241. Cystine bridges form between Cys-309–Cys-318, Cys-317–Cys-380, Cys-346–Cys-411, and Cys-350–Cys-413.

Belongs to the TGF-beta family. In terms of assembly, interacts with the serine proteases, HTRA1 and HTRA3. Interacts with ASPN. Interacts with MFAP5. Interacts with Transforming growth factor beta-2 (TGF-beta-2) chain; interaction is non-covalent and maintains (TGF-beta-2) in a latent state. Interacts with LRRC32/GARP; leading to regulate activation of TGF-beta-2. Interacts with NREP; the interaction results in a decrease in TGFB2 autoinduction. As to quaternary structure, transforming growth factor beta-2: Homodimer; disulfide-linked. Transforming growth factor beta-2: Interacts with TGF-beta receptors (TGFBR1 and TGFBR2), leading to signal transduction. Post-translationally, the precursor proprotein is cleaved in the Golgi apparatus to form Transforming growth factor beta-2 (TGF-beta-2) and Latency-associated peptide (LAP) chains, which remain non-covalently linked, rendering TGF-beta-2 inactive.

The protein localises to the secreted. Its subcellular location is the extracellular space. It is found in the extracellular matrix. Functionally, precursor of the Latency-associated peptide (LAP) and Transforming growth factor beta-2 (TGF-beta-2) chains, which constitute the regulatory and active subunit of TGF-beta-2, respectively. In terms of biological role, required to maintain the Transforming growth factor beta-2 (TGF-beta-2) chain in a latent state during storage in extracellular matrix. Associates non-covalently with TGF-beta-2 and regulates its activation via interaction with 'milieu molecules', such as LTBP1 and LRRC32/GARP, that control activation of TGF-beta-2. Multifunctional protein that regulates various processes such as angiogenesis and heart development. Activation into mature form follows different steps: following cleavage of the proprotein in the Golgi apparatus, Latency-associated peptide (LAP) and Transforming growth factor beta-2 (TGF-beta-2) chains remain non-covalently linked rendering TGF-beta-2 inactive during storage in extracellular matrix. At the same time, LAP chain interacts with 'milieu molecules', such as LTBP1 and LRRC32/GARP, that control activation of TGF-beta-2 and maintain it in a latent state during storage in extracellular milieus. Once activated following release of LAP, TGF-beta-2 acts by binding to TGF-beta receptors (TGFBR1 and TGFBR2), which transduce signal. This is Transforming growth factor beta-2 proprotein (TGFB2) from Mustela putorius furo (European domestic ferret).